An 83-amino-acid polypeptide reads, in one-letter code: Large ribosomal subunit protein bL27c (83 aa).

Residues 1 to 24 (MAHKKGAGSTKNGRDSNAKRLGVK) are disordered.

Belongs to the bacterial ribosomal protein bL27 family.

The protein localises to the plastid. It is found in the chloroplast. This chain is Large ribosomal subunit protein bL27c (rpl27), found in Trieres chinensis (Marine centric diatom).